The primary structure comprises 439 residues: 26S proteasome regulatory subunit 6A (439 aa).

At M1 the chain carries N-acetylmethionine. Position 9 is a phosphoserine (S9). 227–234 (GPPGTGKT) is a binding site for ATP. S376 is subject to Phosphoserine.

Belongs to the AAA ATPase family. Component of the 19S proteasome regulatory particle complex. The 26S proteasome consists of a 20S core particle (CP) and two 19S regulatory subunits (RP). The regulatory particle is made of a lid composed of 9 subunits, a base containing 6 ATPases including PSMC3 and few additional components. Interacts with PAAF1. As to quaternary structure, (Microbial infection) Interacts with HIV-1 Tat. Post-translationally, sumoylated by UBE2I in response to MEKK1-mediated stimuli.

It is found in the cytoplasm. It localises to the nucleus. In terms of biological role, component of the 26S proteasome, a multiprotein complex involved in the ATP-dependent degradation of ubiquitinated proteins. This complex plays a key role in the maintenance of protein homeostasis by removing misfolded or damaged proteins, which could impair cellular functions, and by removing proteins whose functions are no longer required. Therefore, the proteasome participates in numerous cellular processes, including cell cycle progression, apoptosis, or DNA damage repair. PSMC3 belongs to the heterohexameric ring of AAA (ATPases associated with diverse cellular activities) proteins that unfolds ubiquitinated target proteins that are concurrently translocated into a proteolytic chamber and degraded into peptides. This is 26S proteasome regulatory subunit 6A (PSMC3) from Homo sapiens (Human).